We begin with the raw amino-acid sequence, 200 residues long: GTP cyclohydrolase-2 (200 aa).

A GTP-binding site is contributed by 50–54 (RIHSE). Positions 55, 66, and 68 each coordinate Zn(2+). GTP-binding positions include Q71, 93 to 95 (EGR), and T115. The active-site Proton acceptor is D127. R129 serves as the catalytic Nucleophile. GTP contacts are provided by T150 and K155.

Belongs to the GTP cyclohydrolase II family. The cofactor is Zn(2+).

The enzyme catalyses GTP + 4 H2O = 2,5-diamino-6-hydroxy-4-(5-phosphoribosylamino)-pyrimidine + formate + 2 phosphate + 3 H(+). It participates in cofactor biosynthesis; riboflavin biosynthesis; 5-amino-6-(D-ribitylamino)uracil from GTP: step 1/4. Catalyzes the conversion of GTP to 2,5-diamino-6-ribosylamino-4(3H)-pyrimidinone 5'-phosphate (DARP), formate and pyrophosphate. This Acinetobacter baylyi (strain ATCC 33305 / BD413 / ADP1) protein is GTP cyclohydrolase-2.